The sequence spans 101 residues: Small ribosomal subunit protein uS14 (101 aa).

This sequence belongs to the universal ribosomal protein uS14 family. In terms of assembly, part of the 30S ribosomal subunit. Contacts proteins S3 and S10.

In terms of biological role, binds 16S rRNA, required for the assembly of 30S particles and may also be responsible for determining the conformation of the 16S rRNA at the A site. This is Small ribosomal subunit protein uS14 from Blochmanniella pennsylvanica (strain BPEN).